We begin with the raw amino-acid sequence, 2475 residues long: Non-reducing polyketide synthase prhL (2475 aa).

Residues 14–253 (VLFGSKYSEI…HHADHLSAAQ (240 aa)) are N-terminal acylcarrier protein transacylase domain (SAT). Residues 384-800 (SIPIAVTGLA…GSNAAIVLKE (417 aa)) enclose the Ketosynthase family 3 (KS3) domain. Residues cysteine 549, histidine 684, and histidine 723 each act as for beta-ketoacyl synthase activity in the active site. Residues 910 to 1212 (LCFGGQTGNK…CPMDLSGPQA (303 aa)) are malonyl-CoA:ACP transacylase (MAT) domain. The active-site For acyl/malonyl transferase activity is the serine 997. The tract at residues 1279–1407 (EGLKLVQLLK…GTISLSPGAN (129 aa)) is N-terminal hotdog fold. The 308-residue stretch at 1279-1586 (EGLKLVQLLK…FTSVSIQSLR (308 aa)) folds into the PKS/mFAS DH domain. The product template (PT) domain stretch occupies residues 1282-1585 (KLVQLLKNEG…TFTSVSIQSL (304 aa)). The Proton acceptor; for dehydratase activity role is filled by histidine 1312. The C-terminal hotdog fold stretch occupies residues 1435 to 1586 (SSSGLKRSTV…FTSVSIQSLR (152 aa)). The active-site Proton donor; for dehydratase activity is aspartate 1493. The Carrier domain maps to 1626-1703 (SSNGDDLRTV…ALVQRIFPGR (78 aa)). Residue serine 1663 is modified to O-(pantetheine 4'-phosphoryl)serine. Residues 1865 to 2098 (HHTSEHKLLH…GFNWVDWTDN (234 aa)) form a methyltransferase (CMeT) domain region. Residues 2127–2475 (SDIHEETVVY…YEFLRSHVRL (349 aa)) form a thioesterase (TE) domain region. Residues serine 2250 and aspartate 2412 each act as for thioesterase activity in the active site.

The catalysed reaction is 3 malonyl-CoA + acetyl-CoA + 2 S-adenosyl-L-methionine = 3,5-dimethylorsellinate + 2 S-adenosyl-L-homocysteine + 3 CO2 + 4 CoA. It participates in secondary metabolite biosynthesis; terpenoid biosynthesis. Its function is as follows. Non-reducing polyketide synthase; part of the gene cluster that mediates the biosynthesis of paraherquonin, a meroterpenoid with a unique, highly congested hexacyclic molecular architecture. The first step of the pathway is the synthesis of 3,5-dimethylorsellinic acid (DMOA) by the polyketide synthase prhL. Synthesis of DMOA is followed by farnesylation by the prenyltransferase prhE, methylesterification by the methyl-transferase prhM, epoxidation of the prenyl chain by the flavin-dependent monooxygenase prhF, and cyclization of the farnesyl moiety by the terpene cyclase prhH, to yield the tetracyclic intermediate, protoaustinoid A. The short chain dehydrogenase prhI then oxidizes the C-3 alcohol group of the terpene cyclase product to transform protoaustinoid A into protoaustinoid B. The FAD-binding monooxygenase prhJ catalyzes the oxidation of protoaustinoid B into preaustinoid A which is further oxidized into preaustinoid A1 by FAD-binding monooxygenase phrK. Finally, prhA leads to berkeleydione via the berkeleyone B intermediate. PrhA is a multifunctional dioxygenase that first desaturates at C5-C6 to form berkeleyone B, followed by rearrangement of the A/B-ring to form the cycloheptadiene moiety in berkeleydione. Berkeleydione serves as the key intermediate for the biosynthesis of paraherquonin as well as many other meroterpenoids. The cytochrome P450 monooxygenases prhB, prhD, and prhN, as well as the isomerase prhC, are probably involved in the late stage of paraherquonin biosynthesis, after the production of berkeleydione. Especially prhC might be a multifunctional enzyme that catalyzes the D-ring expansion via intramolecular methoxy rearrangement, as well as the hydrolysis of the expanded D-ring. This is Non-reducing polyketide synthase prhL from Penicillium brasilianum.